Reading from the N-terminus, the 375-residue chain is 23S rRNA (uracil(747)-C(5))-methyltransferase RlmC (375 aa).

[4Fe-4S] cluster is bound by residues C3, C11, C14, and C87. 4 residues coordinate S-adenosyl-L-methionine: Q212, F241, E262, and N307. C334 functions as the Nucleophile in the catalytic mechanism.

Belongs to the class I-like SAM-binding methyltransferase superfamily. RNA M5U methyltransferase family. RlmC subfamily.

It catalyses the reaction uridine(747) in 23S rRNA + S-adenosyl-L-methionine = 5-methyluridine(747) in 23S rRNA + S-adenosyl-L-homocysteine + H(+). In terms of biological role, catalyzes the formation of 5-methyl-uridine at position 747 (m5U747) in 23S rRNA. This chain is 23S rRNA (uracil(747)-C(5))-methyltransferase RlmC, found in Salmonella paratyphi A (strain ATCC 9150 / SARB42).